The primary structure comprises 220 residues: MELVEETIPKEGKKMGERIVVDKAYLYQEDKPLTVCKTSLFYTGDGFAAYDCRGDIIFRVDSYGPDTRDNDEIVLMDATGKCLLTVKRKRPTLHQRWEGFLGERSEGQKPIFSVRRSSIIGRCTMEVEVYDGTGEEYIIDGDFSQRSCLIYDTKKCTVAEIKRKVDASTNVMLGRDVFTLEIKPGFDGAFAMGLVVVLDQINGDDPVEIGDEQVHPFVED.

Belongs to the LOR family.

In terms of biological role, might be related to the phospholipid scramblase and tubby-like superfamily of membrane tethered transcription factors. The sequence is that of Protein LURP-one-related 12 from Arabidopsis thaliana (Mouse-ear cress).